The following is a 165-amino-acid chain: Short form salivary protein D7R4 (165 aa).

Residues 1–21 (MIRQVITSYFLTVCLLALVQG) form the signal peptide. 3 disulfides stabilise this stretch: Cys27/Cys59, Cys40/Cys165, and Cys98/Cys117. Noradrenaline is bound by residues Glu28 and Arg43. Glu28 contributes to the serotonin binding site. Positions 56, 115, 132, and 135 each coordinate serotonin. Histamine is bound by residues Tyr115, Asp132, and Glu135. Tryptamine is bound by residues Tyr115, Asp132, and Glu135. 2 residues coordinate noradrenaline: Asp132 and Glu135.

This sequence belongs to the PBP/GOBP family. As to expression, female saliva (at protein level). Female salivary gland. Not detected in female carcass without salivary glands. Not detected in male tissues.

The protein resides in the secreted. Functionally, modulates blood feeding of female mosquitoes on vertebrate species by binding and sequestering different mediators involved in the host response. Binds serotonin, noradrenaline, histamine and tryptamine. Inhibits histamine-, serotonin- and partially noradrenaline-induced smooth muscle contraction. Exhibits vasodilating activity. This is Short form salivary protein D7R4 from Anopheles gambiae (African malaria mosquito).